The chain runs to 189 residues: Ribosome maturation factor RimM (189 aa).

A PRC barrel domain is found at 95-169 (DEDEFFQTDL…IIKVEPHAAG (75 aa)). Residues 168–189 (AGLIADEHDNPPHESGKKPKKP) form a disordered region. Residues 172–189 (ADEHDNPPHESGKKPKKP) are compositionally biased toward basic and acidic residues.

The protein belongs to the RimM family. In terms of assembly, binds ribosomal protein uS19.

It is found in the cytoplasm. Its function is as follows. An accessory protein needed during the final step in the assembly of 30S ribosomal subunit, possibly for assembly of the head region. Essential for efficient processing of 16S rRNA. May be needed both before and after RbfA during the maturation of 16S rRNA. It has affinity for free ribosomal 30S subunits but not for 70S ribosomes. This is Ribosome maturation factor RimM from Brucella abortus (strain S19).